Reading from the N-terminus, the 239-residue chain is uncharacterized protein (239 aa).

It belongs to the initiator RepB protein family.

In terms of biological role, mutations in ORF 239 affects the incN plasmid pUC1 E.coli polA-independence but not its autonomous replication ability. This is an uncharacterized protein from Escherichia coli.